The following is a 366-amino-acid chain: Glutamate 5-kinase (366 aa).

Residue lysine 17 participates in ATP binding. Serine 57, aspartate 144, and asparagine 156 together coordinate substrate. ATP contacts are provided by residues 176–177 (SD) and 216–222 (TGGMASK). The 75-residue stretch at 278–352 (QGILHIDEGA…GKSTQELPAE (75 aa)) folds into the PUA domain.

It belongs to the glutamate 5-kinase family.

The protein localises to the cytoplasm. It carries out the reaction L-glutamate + ATP = L-glutamyl 5-phosphate + ADP. Its pathway is amino-acid biosynthesis; L-proline biosynthesis; L-glutamate 5-semialdehyde from L-glutamate: step 1/2. Its function is as follows. Catalyzes the transfer of a phosphate group to glutamate to form L-glutamate 5-phosphate. The polypeptide is Glutamate 5-kinase (Rhodococcus jostii (strain RHA1)).